A 283-amino-acid polypeptide reads, in one-letter code: Lolitrem B biosynthesis cluster protein S (283 aa).

The signal sequence occupies residues 1-27 (MSRSDWIFISLQGFFCLAGVIWKSREG). Helical transmembrane passes span 73 to 93 (WFWL…LIIL), 112 to 132 (LGYL…SLWI), 157 to 177 (IFWC…VATL), 219 to 239 (MTGT…ALEA), and 250 to 270 (VRMF…DVLL).

This sequence belongs to the ltmS family.

Its subcellular location is the membrane. Part of the gene cluster that mediates the biosynthesis of lolitrems, indole-diterpene mycotoxins that are potent tremorgens in mammals, and are synthesized by clavicipitaceous fungal endophytes in association with their grass hosts. The geranylgeranyl diphosphate (GGPP) synthase ltmG is proposed to catalyze the first step in lolitrem biosynthesis. LtmG catalyzes a series of iterative condensations of isopentenyl diphosphate (IPP) with dimethylallyl diphosphate (DMAPP), geranyl diphosphate (GPP), and farnesyl diphosphate (FPP), to form GGPP. GGPP then condenses with indole-3-glycerol phosphate to form 3-geranylgeranylindole, an acyclic intermediate, to be incorporated into paxilline. Either ltmG or ltmC could be responsible for this step, as both are putative prenyl transferases. The FAD-dependent monooxygenase ltmM then catalyzes the epoxidation of the two terminal alkenes of the geranylgeranyl moiety, which is subsequently cyclized by ltmB, to paspaline. The cytochrome P450 monooxygenases ltmQ and ltmP can sequentially oxidize paspaline to terpendole E and terpendole F. Alternatively, ltmP converts paspaline to an intermediate which is oxidized by ltmQ to terpendole F. LtmF, ltmK, ltmE and ltmJ appear to be unique to the epichloe endophytes. The prenyltransferase ltmF is involved in the 27-hydroxyl-O-prenylation. The cytochrome P450 monooxygenase ltmK is required for the oxidative acetal ring formation. The multi-functional prenyltransferase ltmE is required for C20- and C21-prenylations of the indole ring of paspalanes and acts together with the cytochrome P450 monooxygenase ltmJ to yield lolitremanes by multiple oxidations and ring closures. The stereoisomer pairs of lolitriol and lolitrem N or lolitrem B and lolitrem F may be attributed to variations in the way in which ring closure can occur under the action of ltmJ. While the major product of this pathway is lolitrem B, the prenyl transferases and cytochrome P450 monooxygenases identified in this pathway have a remarkable versatility in their regio- and stereo-specificities to generate a diverse range of metabolites that are products of a metabolic grid rather than a linear pathway. The sequence is that of Lolitrem B biosynthesis cluster protein S from Epichloe festucae (strain Fl1).